The following is a 131-amino-acid chain: Large ribosomal subunit protein bL17 (131 aa).

The protein belongs to the bacterial ribosomal protein bL17 family. Part of the 50S ribosomal subunit. Contacts protein L32.

This Bordetella petrii (strain ATCC BAA-461 / DSM 12804 / CCUG 43448) protein is Large ribosomal subunit protein bL17.